A 205-amino-acid polypeptide reads, in one-letter code: Small ribosomal subunit protein uS4 (205 aa).

Positions 18-49 (NIWGRPKSPVNKREYGPGQHGQRRKGKLSDFG) are disordered. Residues 94-157 (RRLDTVVYRA…KQLALVLEAN (64 aa)) enclose the S4 RNA-binding domain.

It belongs to the universal ribosomal protein uS4 family. In terms of assembly, part of the 30S ribosomal subunit. Contacts protein S5. The interaction surface between S4 and S5 is involved in control of translational fidelity.

Its function is as follows. One of the primary rRNA binding proteins, it binds directly to 16S rRNA where it nucleates assembly of the body of the 30S subunit. Functionally, with S5 and S12 plays an important role in translational accuracy. This chain is Small ribosomal subunit protein uS4, found in Nitrobacter hamburgensis (strain DSM 10229 / NCIMB 13809 / X14).